Consider the following 283-residue polypeptide: Tetraspanin-33 (283 aa).

Over Met-1 to Tyr-24 the chain is Cytoplasmic. The helical transmembrane segment at Leu-25–Val-45 threads the bilayer. Over Tyr-46 to Pro-64 the chain is Extracellular. Residues Ala-65–Gly-85 form a helical membrane-spanning segment. The Cytoplasmic portion of the chain corresponds to Ser-86–Thr-96. A helical transmembrane segment spans residues Phe-97–Val-117. Topologically, residues Phe-118 to Asn-235 are extracellular. Intrachain disulfides connect Cys-156–Cys-224, Cys-157–Cys-189, Cys-173–Cys-183, and Cys-190–Cys-203. N-linked (GlcNAc...) asparagine glycosylation is present at Asn-172. A helical membrane pass occupies residues Leu-236–Leu-256. Residues Ser-257–Tyr-283 lie on the Cytoplasmic side of the membrane.

Belongs to the tetraspanin (TM4SF) family. Homodimer; disulfide-linked. Interacts (via extracellular domain) with ADAM10 (via extracellular domain). Interacts (via cytoplasmic domain) with PLEKHA7 (via WW domains); the interaction is dependent on PDZD11 being bound to PLEKHA7 and facilitates the docking of ADAM10 to zonula adherens.

It localises to the cell membrane. The protein resides in the cell junction. It is found in the adherens junction. The protein localises to the cytoplasm. In terms of biological role, part of TspanC8 subgroup, composed of 6 members that interact with the transmembrane metalloprotease ADAM10. This interaction is required for ADAM10 exit from the endoplasmic reticulum and for enzymatic maturation and trafficking to the cell surface as well as substrate specificity. Different TspanC8/ADAM10 complexes have distinct substrates. Plays an important role in normal erythropoiesis. It has a role in the differentiation of erythroid progenitors. Negatively regulates ligand-induced Notch activity probably by regulating ADAM10 activity. Mediates docking of ADAM10 to zonula adherens by interacting with ADAM10 and, in a PDZD11-dependent manner, with the zonula adherens protein PLEKHA7. This chain is Tetraspanin-33 (TSPAN33), found in Bos taurus (Bovine).